We begin with the raw amino-acid sequence, 108 residues long: UPF0060 membrane protein Mvan_3406 (108 aa).

The next 4 helical transmembrane spans lie at 7–27 (LLFV…WQGV), 32–52 (GLTW…VAAF), 61–81 (VLAA…VVAD), and 87–107 (RWDI…MYAP).

This sequence belongs to the UPF0060 family.

The protein resides in the cell membrane. This chain is UPF0060 membrane protein Mvan_3406, found in Mycolicibacterium vanbaalenii (strain DSM 7251 / JCM 13017 / BCRC 16820 / KCTC 9966 / NRRL B-24157 / PYR-1) (Mycobacterium vanbaalenii).